Consider the following 489-residue polypeptide: Cytochrome P450 monooxygenase prhB (489 aa).

The next 3 membrane-spanning stretches (helical) occupy residues 1 to 21, 212 to 232, and 287 to 307; these read MFSFGFLITAVVFWVVTKVIY, VIFQCLGFFPWIKEPLVMIFA, and LFIGAGAESTATLLMGVAYLL. 2 N-linked (GlcNAc...) asparagine glycosylation sites follow: Asn347 and Asn379. Cys431 contacts heme.

The protein belongs to the cytochrome P450 family. Heme is required as a cofactor.

The protein resides in the membrane. It functions in the pathway secondary metabolite biosynthesis; terpenoid biosynthesis. Functionally, cytochrome P450 monooxygenase; part of the gene cluster that mediates the biosynthesis of paraherquonin, a meroterpenoid with a unique, highly congested hexacyclic molecular architecture. The first step of the pathway is the synthesis of 3,5-dimethylorsellinic acid (DMOA) by the polyketide synthase prhL. Synthesis of DMOA is followed by farnesylation by the prenyltransferase prhE, methylesterification by the methyl-transferase prhM, epoxidation of the prenyl chain by the flavin-dependent monooxygenase prhF, and cyclization of the farnesyl moiety by the terpene cyclase prhH, to yield the tetracyclic intermediate, protoaustinoid A. The short chain dehydrogenase prhI then oxidizes the C-3 alcohol group of the terpene cyclase product to transform protoaustinoid A into protoaustinoid B. The FAD-binding monooxygenase prhJ catalyzes the oxidation of protoaustinoid B into preaustinoid A which is further oxidized into preaustinoid A1 by FAD-binding monooxygenase phrK. Finally, prhA leads to berkeleydione via the berkeleyone B intermediate. PrhA is a multifunctional dioxygenase that first desaturates at C5-C6 to form berkeleyone B, followed by rearrangement of the A/B-ring to form the cycloheptadiene moiety in berkeleydione. Berkeleydione serves as the key intermediate for the biosynthesis of paraherquonin as well as many other meroterpenoids. The cytochrome P450 monooxygenases prhB, prhD, and prhN, as well as the isomerase prhC, are probably involved in the late stage of paraherquonin biosynthesis, after the production of berkeleydione. Especially prhC might be a multifunctional enzyme that catalyzes the D-ring expansion via intramolecular methoxy rearrangement, as well as the hydrolysis of the expanded D-ring. The protein is Cytochrome P450 monooxygenase prhB of Penicillium brasilianum.